Here is a 406-residue protein sequence, read N- to C-terminus: DNA primase DnaG (406 aa).

Residues proline 169–isoleucine 247 enclose the Toprim domain. Glutamate 175, aspartate 220, and aspartate 222 together coordinate Mg(2+).

This sequence belongs to the archaeal DnaG primase family. As to quaternary structure, forms a ternary complex with MCM helicase and DNA. Component of the archaeal exosome complex. Interacts with Csl4 but not with Rrp4. It depends on Mg(2+) as a cofactor.

The enzyme catalyses ssDNA + n NTP = ssDNA/pppN(pN)n-1 hybrid + (n-1) diphosphate.. RNA polymerase that catalyzes the synthesis of short RNA molecules used as primers for DNA polymerase during DNA replication. Can use NTPs but not dNTPs. Binds DNA. Also part of the exosome, which is a complex involved in RNA degradation. Acts as a poly(A)-binding protein that enhances the interaction between heteromeric, adenine-rich transcripts and the exosome. The polypeptide is DNA primase DnaG (Saccharolobus solfataricus (strain ATCC 35092 / DSM 1617 / JCM 11322 / P2) (Sulfolobus solfataricus)).